Consider the following 192-residue polypeptide: Large ribosomal subunit protein bL25 (192 aa).

Belongs to the bacterial ribosomal protein bL25 family. CTC subfamily. In terms of assembly, part of the 50S ribosomal subunit; part of the 5S rRNA/L5/L18/L25 subcomplex. Contacts the 5S rRNA. Binds to the 5S rRNA independently of L5 and L18.

This is one of the proteins that binds to the 5S RNA in the ribosome where it forms part of the central protuberance. This Solidesulfovibrio magneticus (strain ATCC 700980 / DSM 13731 / RS-1) (Desulfovibrio magneticus) protein is Large ribosomal subunit protein bL25.